Consider the following 140-residue polypeptide: Putative nickel-responsive regulator 3 (140 aa).

Ni(2+)-binding residues include H81, H92, H94, and C100.

The protein belongs to the transcriptional regulatory CopG/NikR family. Ni(2+) is required as a cofactor.

In terms of biological role, transcriptional regulator. This chain is Putative nickel-responsive regulator 3, found in Methanosarcina mazei (strain ATCC BAA-159 / DSM 3647 / Goe1 / Go1 / JCM 11833 / OCM 88) (Methanosarcina frisia).